A 330-amino-acid polypeptide reads, in one-letter code: Zinc finger protein Gfi-1b (330 aa).

Positions M1–V20 are SNAG domain. Residues M1 to N42 are disordered. K8 is modified (N6,N6-dimethyllysine). The segment at G91–K330 is interaction with ARIH2. 6 consecutive C2H2-type zinc fingers follow at residues Y163–H186, F192–H214, F220–H242, Y248–H270, H276–H298, and F304–H327. A mediates interaction with GATA1 region spans residues H164–K330.

In terms of assembly, component of a RCOR-GFI-KDM1A-HDAC complex. Interacts directly with RCOR1, KDM1A and HDAC2. Forms a complex with GATA1. Interacts with histone methyltransferases EHMT2 and SUV39H1. Interacts with ARIH2 (via RING-type 2). Interacts with RUNX1T1. In terms of processing, methylation at Lys-8 in the SNAG domain seems required for the recruitment of the corepressor complex. In terms of tissue distribution, expressed in bone marrow and fetal liver, but also detectable in fetal spleen, fetal thymus, and testes. Detected in hematopoietic stem cells, erythroblasts, and megakaryocytes. Overexpressed in bone marrow of patients with erythroleukemia and megakaryocytic leukemia as well as in their corresponding leukemic cell lines, and markedly repressed in severe aplastic anemia (SAA).

It is found in the nucleus. Essential proto-oncogenic transcriptional regulator necessary for development and differentiation of erythroid and megakaryocytic lineages. Component of a RCOR-GFI-KDM1A-HDAC complex that suppresses, via histone deacetylase (HDAC) recruitment, a number of genes implicated in multilineage blood cell development and controls hematopoietic differentiation. Transcriptional repressor or activator depending on both promoter and cell type context; represses promoter activity of SOCS1 and SOCS3 and thus, may regulate cytokine signaling pathways. Cooperates with GATA1 to repress target gene transcription, such as the apoptosis regulator BCL2L1; GFI1B silencing in leukemic cell lines markedly increase apoptosis rate. Inhibits down-regulation of MYC and MYB as well as the cyclin-dependent kinase inhibitor CDKN1A/P21WAF1 in IL6-treated myelomonocytic cells. Represses expression of GATA3 in T-cell lymphomas and inhibits GATA1-mediated transcription; as GATA1 also mediates erythroid GFI1B transcription, both GATA1 and GFI1B participate in a feedback regulatory pathway controlling the expression of GFI1B gene in erythroid cells. Suppresses GATA1-mediated stimulation of GFI1B promoter through protein interaction. Binds to gamma-satellite DNA and to its own promoter, auto-repressing its own expression. Alters histone methylation by recruiting histone methyltransferase to target genes promoters. Plays a role in heterochromatin formation. The polypeptide is Zinc finger protein Gfi-1b (GFI1B) (Homo sapiens (Human)).